The chain runs to 84 residues: Cytochrome b559 subunit alpha (84 aa).

Residues 22–36 (IIHIPAITILFASGF) traverse the membrane as a helical segment. Histidine 24 provides a ligand contact to heme.

This sequence belongs to the PsbE/PsbF family. Heterodimer of an alpha subunit and a beta subunit. PSII is composed of 1 copy each of membrane proteins PsbA, PsbB, PsbC, PsbD, PsbE, PsbF, PsbH, PsbI, PsbJ, PsbK, PsbL, PsbM, PsbT, PsbX, Psb30/Ycf12, peripheral proteins PsbO, CyanoQ (PsbQ), PsbU, PsbV and a large number of cofactors. It forms dimeric complexes. It depends on heme b as a cofactor.

Its subcellular location is the cell inner membrane. Its function is as follows. This b-type cytochrome is tightly associated with the reaction center of photosystem II (PSII). PSII is a light-driven water:plastoquinone oxidoreductase that uses light energy to abstract electrons from H(2)O, generating O(2) and a proton gradient subsequently used for ATP formation. It consists of a core antenna complex that captures photons, and an electron transfer chain that converts photonic excitation into a charge separation. In Gloeobacter violaceus (strain ATCC 29082 / PCC 7421), this protein is Cytochrome b559 subunit alpha.